Consider the following 565-residue polypeptide: Periplasmic trehalase (565 aa).

An N-terminal signal peptide occupies residues 1-30; that stretch reads MKSPAPSRPQKMALIPACIFLCFAALSVQA. Substrate contacts are provided by residues arginine 152, 159-160, asparagine 196, 205-207, 277-279, and glycine 310; these read WD, RSQ, and RPE. Active-site proton donor/acceptor residues include aspartate 312 and glutamate 496. Glutamate 511 contacts substrate. The tract at residues 539 to 565 is disordered; sequence CDNVPATRPLSESTTQPLKQKEAEPTP.

This sequence belongs to the glycosyl hydrolase 37 family. As to quaternary structure, monomer.

Its subcellular location is the periplasm. The enzyme catalyses alpha,alpha-trehalose + H2O = alpha-D-glucose + beta-D-glucose. Provides the cells with the ability to utilize trehalose at high osmolarity by splitting it into glucose molecules that can subsequently be taken up by the phosphotransferase-mediated uptake system. In Escherichia coli O1:K1 / APEC, this protein is Periplasmic trehalase.